The chain runs to 259 residues: Proliferating cell nuclear antigen (259 aa).

Residues 61 to 80 (RCDRNIALGVNLTSLTKVLR) mediate DNA binding. Lys164 is covalently cross-linked (Glycyl lysine isopeptide (Lys-Gly) (interchain with G-Cter in SUMO); alternate). Lys164 participates in a covalent cross-link: Glycyl lysine isopeptide (Lys-Gly) (interchain with G-Cter in ubiquitin); alternate.

The protein belongs to the PCNA family. As to quaternary structure, homotrimer. Monoubiquitinated on Lys-164 upon DNA damage, and then polyubiquitinated through 'Lys-63'-linkage.

Its subcellular location is the nucleus. Functionally, this protein is an auxiliary protein of DNA polymerase delta and is involved in the control of eukaryotic DNA replication by increasing the polymerase's processibility during elongation of the leading strand. Involved in DNA repair. In Chaetomium thermophilum (strain DSM 1495 / CBS 144.50 / IMI 039719) (Thermochaetoides thermophila), this protein is Proliferating cell nuclear antigen.